A 238-amino-acid chain; its full sequence is Uridylate kinase (238 aa).

Residue 13–16 (KLSG) participates in ATP binding. Residue Gly-53 participates in UMP binding. ATP-binding residues include Gly-54 and Arg-58. UMP is bound by residues Asp-73 and 134–141 (AGLPYFST). ATP contacts are provided by Asn-162, Tyr-168, and Asp-171.

Belongs to the UMP kinase family. As to quaternary structure, homohexamer.

The protein resides in the cytoplasm. The catalysed reaction is UMP + ATP = UDP + ADP. The protein operates within pyrimidine metabolism; CTP biosynthesis via de novo pathway; UDP from UMP (UMPK route): step 1/1. Its activity is regulated as follows. Inhibited by UTP. Catalyzes the reversible phosphorylation of UMP to UDP. The sequence is that of Uridylate kinase from Clavibacter michiganensis subsp. michiganensis (strain NCPPB 382).